The chain runs to 150 residues: UPF0039 protein C11D3.02c (150 aa).

In terms of domain architecture, N-acetyltransferase spans 9–150; sequence KYFNSLDVKE…IPHVEMRLEL (142 aa).

The protein belongs to the UPF0039 (ElaA) family.

The sequence is that of UPF0039 protein C11D3.02c from Schizosaccharomyces pombe (strain 972 / ATCC 24843) (Fission yeast).